The following is a 333-amino-acid chain: Homeobox protein engrailed-2 (333 aa).

Disordered stretches follow at residues 1–49, 95–206, and 223–250; these read MEEN…RALM, GRGG…GANL, and SDRP…PRTA. Composition is skewed to gly residues over residues 25–36 and 95–117; these read PGGGSGGGGGSS and GRGG…GAGG. Composition is skewed to low complexity over residues 142-151 and 191-200; these read PLPAAGSDSP and LSVSSDSDSS. Residues 244–303 constitute a DNA-binding region (homeobox); it reads DKRPRTAFTAEQLQRLKAEFQTNRYLTEQRRQSLAQELSLNESQIKIWFQNKRAKIKKAT.

This sequence belongs to the engrailed homeobox family.

It localises to the nucleus. The sequence is that of Homeobox protein engrailed-2 (EN2) from Homo sapiens (Human).